Reading from the N-terminus, the 145-residue chain is uncharacterized protein (145 aa).

The region spanning 1–145 (LQYRAADTNA…NGQIVWGTAP (145 aa)) is the CBM3 domain.

This is an uncharacterized protein from Paenibacillus lautus (Bacillus lautus).